The chain runs to 240 residues: Probable transcriptional regulatory protein BLi02909/BL01150 (240 aa).

Residues 1–14 (MAGHSKWKNIQRRK) are compositionally biased toward basic residues. The segment at 1-21 (MAGHSKWKNIQRRKNAQDAKR) is disordered.

The protein belongs to the TACO1 family.

Its subcellular location is the cytoplasm. The protein is Probable transcriptional regulatory protein BLi02909/BL01150 of Bacillus licheniformis (strain ATCC 14580 / DSM 13 / JCM 2505 / CCUG 7422 / NBRC 12200 / NCIMB 9375 / NCTC 10341 / NRRL NRS-1264 / Gibson 46).